A 644-amino-acid polypeptide reads, in one-letter code: DNA mismatch repair protein MutL (644 aa).

The disordered stretch occupies residues 336-400; it reads ERPFEPSSPQ…EISRDSSLGE (65 aa). The span at 373–400 shows a compositional bias: basic and acidic residues; sequence SKTHSTWDEASRVDTSRAEISRDSSLGE.

This sequence belongs to the DNA mismatch repair MutL/HexB family.

Its function is as follows. This protein is involved in the repair of mismatches in DNA. It is required for dam-dependent methyl-directed DNA mismatch repair. May act as a 'molecular matchmaker', a protein that promotes the formation of a stable complex between two or more DNA-binding proteins in an ATP-dependent manner without itself being part of a final effector complex. The polypeptide is DNA mismatch repair protein MutL (Shewanella sp. (strain MR-7)).